The primary structure comprises 223 residues: Uracil-DNA glycosylase (223 aa).

The Proton acceptor role is filled by Asp-66.

Belongs to the uracil-DNA glycosylase (UDG) superfamily. UNG family.

Its subcellular location is the cytoplasm. The enzyme catalyses Hydrolyzes single-stranded DNA or mismatched double-stranded DNA and polynucleotides, releasing free uracil.. Functionally, excises uracil residues from the DNA which can arise as a result of misincorporation of dUMP residues by DNA polymerase or due to deamination of cytosine. This chain is Uracil-DNA glycosylase, found in Sulfurimonas denitrificans (strain ATCC 33889 / DSM 1251) (Thiomicrospira denitrificans (strain ATCC 33889 / DSM 1251)).